The primary structure comprises 140 residues: Lysozyme c-1 (140 aa).

The signal sequence occupies residues 1 to 20 (MKVFSTVLLAIVACCAVAEA). In terms of domain architecture, C-type lysozyme spans 21 to 140 (KTFGKCELAK…KKLPNVSSCF (120 aa)). Disulfide bonds link cysteine 26–cysteine 139, cysteine 47–cysteine 128, cysteine 81–cysteine 94, and cysteine 90–cysteine 108. Catalysis depends on residues glutamate 52 and aspartate 69.

Belongs to the glycosyl hydrolase 22 family. Expressed in salivary glands and Malpighian tubules.

The enzyme catalyses Hydrolysis of (1-&gt;4)-beta-linkages between N-acetylmuramic acid and N-acetyl-D-glucosamine residues in a peptidoglycan and between N-acetyl-D-glucosamine residues in chitodextrins.. Functionally, lysozymes have primarily a bacteriolytic function; those in tissues and body fluids are associated with the monocyte-macrophage system and enhance the activity of immunoagents. The polypeptide is Lysozyme c-1 (Anopheles gambiae (African malaria mosquito)).